The chain runs to 523 residues: MFS-type transporter R5 (523 aa).

The disordered stretch occupies residues 19 to 42 (QLNEATAQRESATNNPNDSSSIDE). Residues 21–38 (NEATAQRESATNNPNDSS) show a composition bias toward polar residues. Asn35, Asn94, and Asn143 each carry an N-linked (GlcNAc...) asparagine glycan. 2 helical membrane-spanning segments follow: residues 183 to 203 (AYLT…GGLL) and 211 to 231 (AIFW…FTFF). Residues Asn235 and Asn250 are each glycosylated (N-linked (GlcNAc...) asparagine). 6 helical membrane-spanning segments follow: residues 291-311 (FIVC…ISIF), 319-339 (YGYS…GSIL), 381-401 (LTIS…YGWL), 408-428 (VASV…VLIA), 443-463 (ALGA…VAAV), and 470-490 (IGIG…LPAL).

Belongs to the major facilitator superfamily.

The protein resides in the membrane. In terms of biological role, MFS-type transporter; part of the gene cluster that mediates the biosynthesis of squalestatin S1 (SQS1, also known as zaragozic acid A), a heavily oxidized fungal polyketide that offers potent cholesterol lowering activity by targeting squalene synthase (SS). The sequence is that of MFS-type transporter R5 from Phoma sp. (strain ATCC 20986 / MF5453).